The primary structure comprises 4008 residues: MGVLKVWLGLALALAEFAVLPHHSEGACVYQDSLLADATIWKPDSCQSCRCHGDIVICKPAVCRNPQCAFEKGEVLQIAANQCCPECVLRTPGSCHHEKKIHEHGTEWASSPCSVCSCNHGEVRCTPQPCPPLSCGHQELAFIPEGSCCPVCVGLGKPCSYEGHVFQDGEDWRLSRCAKCLCRNGVAQCFTAQCQPLFCNQDETVVRVPGKCCPQCSARSCSAAGQVYEHGEQWSENACTTCICDRGEVRCHKQACLPLRCGKGQSRARRHGQCCEECVSPAGSCSYDGVVRYQDEMWKGSACEFCMCDHGQVTCQTGECAKVECARDEELIHLDGKCCPECISRNGYCVYEETGEFMSSNASEVKRIPEGEKWEDGPCKVCECRGAQVTCYEPSCPPCPVGTLALEVKGQCCPDCTSVHCHPDCLTCSQSPDHCDLCQDPTKLLQNGWCVHSCGLGFYQAGSLCLACQPQCSTCTSGLECSSCQPPLLMRHGQCVPTCGDGFYQDRHSCAVCHESCAGCWGPTEKHCLACRDPLHVLRDGGCESSCGKGFYNRQGTCSACDQSCDSCGPSSPRCLTCTEKTVLHDGKCMSECPGGYYADATGRCKVCHNSCASCSGPTPSHCTACSPPKALRQGHCLPRCGEGFYSDHGVCKACHSSCLACMGPAPSHCTGCKKPEEGLQVEQLSDVGIPSGECLAQCRAHFYLESTGICEACHQSCFRCAGKSPHNCTDCGPSHVLLDGQCLSQCPDGYFHQEGSCTECHPTCRQCHGPLESDCISCYPHISLTNGNCRTSCREEQFLNLVGYCADCHHLCQHCAADLHNTGSICLRCQNAHYLLLGDHCVPDCPSGYYAERGACKKCHSSCRTCQGRGPFSCSSCDTNLVLSHTGTCSTTCFPGHYLDDNHVCQPCNTHCGSCDSQASCTSCRDPNKVLLFGECQYESCAPQYYLDFSTNTCKECDWSCSACSGPLKTDCLQCMDGYVLQDGACVEQCLSSFYQDSGLCKNCDSYCLQCQGPHECTRCKGPFLLLEAQCVQECGKGYFADHAKHKCTACPQGCLQCSHRDRCHLCDHGFFLKSGLCVYNCVPGFSVHTSNETCSGKIHTPSLHVNGSLILPIGSIKPLDFSLLNVQDQEGRVEDLLFHVVSTPTNGQLVLSRNGKEVQLDKAGRFSWKDVNEKKVRFVHSKEKLRKGYLFLKISDQQFFSEPQLINIQAFSTQAPYVLRNEVLHISRGERATITTQMLDIRDDDNPQDVVIEIIDPPLHGQLLQTLQSPATPIYQFQLDELSRGLLHYAHDGSDSTSDVAVLQANDGHSFHNILFQVKTVPQNDRGLQLVANSMVWVPEGGMLQITNRILQAEAPGASAEEIIYKITQDYPQFGEVVLLVNMPADSPADEGQHLPDGRTATPTSTFTQQDINEGIVWYRHSGAPAQSDSFRFEVSSASNAQTRLESHMFNIAILPQTPEAPKVSLEASLHMTAREDGLTVIQPHSLSFINSEKPSGKIVYNITLPLHPNQGIIEHRDHPHSPIRYFTQEDINQGKVMYRPPPAAPHLQELMAFSFAGLPESVKFHFTVSDGEHTSPEMVLTIHLLPSDQQLPVFQVTAPRLAVSPGGSTSVGLQVVVRDAETAPKELFFELRRPPQHGVLLKHTAEFRRPMATGDTFTYEDVEKNALQYIHDGSSTREDSMEISVTDGLTVTMLEVRVEVSLSEDRGPRLAAGSSLSITVASKSTAIITRSHLAYVDDSSPDPEIWIQLNYLPSYGTLLRISGSEVEELSEVSNFTMEDINNKKIRYSAVFETDGHLVTDSFYFSVSDMDHNHLDNQIFTIMITPAENPPPVIAFADLITVDEGGRAPLSFHHFFATDDDDNLQRDAIIKLSALPKYGCIENTGTGDRFGPETASDLEASFPIQDVLENYIYYFQSVHESIEPTHDIFSFYVSDGTSRSEIHSINITIERKNDEPPRMTLQPLRVQLSSGVVISNSSLSLQDLDTPDNELIFVLTKKPDHGHVLWRQTASEPLENGRVLVQGSTFTYQDILAGLVGYVPSVPGMVVDEFQFSLTDGLHVDTGRMKIYTELPASDTPHLAINQGLQLSAGSVARITEQHLKVTDIDSDDHQVMYIMKEDPGAGRLQMMKHGNLEQISIKGPIRSFTQADISQGQPEYSHGTGEPGGSFAFKFDVVDGEGNRLIDKSFSISISEDKSPPVITTNKGLVLDENSVKKITTLQLSATDQDSGPTELIYRITRQPQLGHLEHAASPGIQISSFTQADLTSRNVQYVHSSEAEKHSDAFSFTLSDGVSEVTQTFHITLHPVDDSLPVVQNLGMRVQEGMRKTITEFELKAVDADTEAESVTFTIVQPPRHGTIERTSNGQHFHLTSTFTMKDIYQNRVSYSHDGSNSLKDRFTFTVSDGTNPFFIIEEGGKEIMTAAPQPFRVDILPVDDGTPRIVTNLGLQWLEYMDGKATNLITKKELLTMDPDTEDAQLVYEITTGPKHGFVENKLQPGRAAATFTQEDVNLGLIRYVLHKEKIREMMDSFQFLVKDSKPNVVSDNVFHIQWSLISFKYTSYNVSEKAGSVSVTVQRTGNLNQYAIVLCRTEQGTASSSSQPGQQDYVEYAGQVQFDEREDTKSCTIVINDDDVFENVESFTVELSMPAYALLGEFTQAKVIINDTEDEPTLEFDKKIYWVNESAGFLFAPIERKGDASSIVSAICYTVPKSAMGSLFYALESGSDFKSRGMSAASRVIFGPGVTMSTCDVMLIDDSEYEEEEEFEIALADASDNARIGRVATAKVLISGPNDASTVSLGNTAFTVSEDAGTVKIPVIRHGTDLSTFASVWCATRPSDPASATPGVDYVPSSRKVEFGPGVIEQYCTLTILDDTQYPVIEGLETFVVFLSSAQGAELTKPFQAVIAINDTFQDVPSMQFAKDLLLVKEKEGVLHVPITRSGDLSYESSVRCYTQSHSAQVMEDFEERQNADSSRITFLKGDKVKNCTVYIHDDSMFEPEEQFRVYLGLPLGNHWSGARIGKNNMATITISNDEDAPTIEFEEAAYQVREPAGPDAIAILNIKVIRRGDQNRTSKVRCSTRDGSAQSGVDYYPKSRVLKFSPGVDHIFFKVEILSNEDREWHESFSLVLGPDDPVEAVLGDVTTATVTILDQEAAGSLILPAPPIVVTLADYDHVEEVTKEGVKKSPSPGYPLVCVTPCDPHFPRYAVMKERCSEAGINQTSVQFSWEVAAPTDGNGARSPFETITDNTPFTSVNHMVLDSIYFSRRFHVRCVAKAVDKVGHVGTPLRSNIVTIGTDSAICHTPVVAGTSRGFQAQSFIATLKYLDVKHKEHPNRIHISVQIPHQDGMLPLISTMPLHNLHFLLSESIYRHQHVCSNLVTTYDLRGLAEAGFLDDVVYDSTALGPGYDRPFQFDPSVREPKTIQLYKHLNLKSCVWTFDAYYDMTELIDVCGGSVTADFQVRDSAQSFLTVHVPLYVSYIYVTAPRGWASLEHHTEMEFSFFYDTVLWRTGIQTDSVLSARLQIIRIYIREDGRLVIEFKTHAKFRGQFVMEHHTLPEVKSFVLTPDHLGGIEFDLQLLWSAQTFDSPHQLWRATSSYNRKDYSGEYTIYLIPCTVQPTQPWVDPGEKPLACTAHAPERFLIPIAFQQTNRPVPVVYSLNTEFQLCNNEKVFLMDPNTSDMSLAEMDYKGAFSKGQILYGRVLWNPEQNLNSAYKLQLEKVYLCTGKDGYVPFFDPTGTIYNEGPQYGCIQPNKHLKHRFLLLDRNQPEVTDKYFHDVPFEAHFASELPDFHVVSNMPGVDGFTLKVDALYKVEAGHQWYLQVIYIIGPDTISGPRVQRSLTAPLRRNRRDLVEPDGQLILDDSLIYDNEGDQVKNGTNMKSLNLEMQELAVAASLSQTGASIGSALAAIMLLLLVFLVACFINRKCQKQRKKKPAEDILEEYPLNTKVEVPKRHPDRVEKNVNRHYCTVRNVNILSEPEAAYTFKGAKVKRLNLEVRVHNNLQDGTEV.

Positions 1-26 (MGVLKVWLGLALALAEFAVLPHHSEG) are cleaved as a signal peptide. VWFC domains follow at residues 27-88 (ACVY…PECV), 93-153 (GSCH…PVCV), 157-217 (KPCS…PQCS), 219-279 (RSCS…EECV), and 283-343 (GSCS…PECI). Residues 27–3901 (ACVYQDSLLA…AASLSQTGAS (3875 aa)) are Extracellular-facing. S344 is modified (phosphoserine). The region spanning 347–417 (GYCVYEETGE…VKGQCCPDCT (71 aa)) is the VWFC 6 domain. An N-linked (GlcNAc...) asparagine glycan is attached at N361. FU repeat units lie at residues 409–460 (KGQC…GFYQ), 462–505 (GSLC…GFYQ), 507–553 (RHSC…GFYN), 555–599 (QGTC…GYYA), 602–647 (TGRC…GFYS), 649–705 (HGVC…HFYL), 708–753 (TGIC…GYFH), 755–800 (EGSC…EQFL), 803–852 (VGYC…GYYA), 854–900 (RGAC…GHYL), 903–948 (NHVC…QYYL), 952–997 (TNTC…SFYQ), 999–1042 (SGLC…GYFA), and 1046–1089 (KHKC…GFSV). The N-linked (GlcNAc...) asparagine glycan is linked to N728. 2 N-linked (GlcNAc...) asparagine glycosylation sites follow: N1093 and N1108. CSPG repeat units lie at residues 1102-1197 (TPSL…LKIS), 1217-1308 (APYV…LQAN), 1329-1438 (GLQL…FEVS), 1463-1559 (APKV…FSFA), 1595-1689 (PVFQ…ISVT), 1710-1810 (GPRL…FSVS), and 1833-1936 (PPVI…FYVS). N-linked (GlcNAc...) asparagine glycosylation occurs at N1504. N-linked (GlcNAc...) asparagine glycosylation occurs at N1777. N-linked (GlcNAc...) asparagine glycans are attached at residues N1948 and N1978. 5 CSPG repeats span residues 1957 to 2057 (EPPR…FSLT), 2078 to 2177 (TPHL…FDVV), 2199 to 2291 (PPVI…FTLS), 2311 to 2404 (SLPV…FTVS), and 2439 to 2536 (TPRI…FLVK). 5 consecutive Calx-beta domains span residues 2543-2646 (VSDN…VELS), 2659-2770 (AKVI…IALA), 2784-2890 (AKVL…VFLS), 2905-3007 (IAIN…VYLG), and 3025-3129 (ATIT…LVLG). N-linked (GlcNAc...) asparagine glycans are attached at residues N2563, N2664, and N2682. N-linked (GlcNAc...) asparagine glycans are attached at residues N2908, N2985, N3070, N3218, N3676, and N3875. The chain crosses the membrane as a helical span at residues 3902 to 3922 (IGSALAAIMLLLLVFLVACFI). Topologically, residues 3923–4008 (NRKCQKQRKK…HNNLQDGTEV (86 aa)) are cytoplasmic.

It belongs to the FRAS1 family. In terms of tissue distribution, expressed in many adult tissues, with highest levels in kidney, pancreas and thalamus. Relatively high expression was also detected in fetal kidney and heart.

The protein localises to the cell membrane. Involved in extracellular matrix organization. Required for the regulation of epidermal-basement membrane adhesion responsible for proper organogenesis during embryonic development. Involved in brain organization and function. The polypeptide is Extracellular matrix organizing protein FRAS1 (Homo sapiens (Human)).